Consider the following 526-residue polypeptide: Tyrosine-protein kinase transforming protein Src (526 aa).

Positions 1–57 (MGSSKSKPKDPSQRRRSLEPPDSTHHGGFPASQTPNKTAAPDTHRTPSRSFGTVATE) are disordered. Glycine 2 carries N-myristoyl glycine; by host lipidation. Over residues 7–25 (KPKDPSQRRRSLEPPDSTH) the composition is skewed to basic and acidic residues. In terms of domain architecture, SH3 spans 81-142 (GGVTTFVALY…PSNYVAPSDS (62 aa)). The region spanning 148 to 245 (WYFGKITRRE…GLCHRLTNVC (98 aa)) is the SH2 domain. The Protein kinase domain occupies 267–517 (LRLEVKLGQG…TFEYLQAQLL (251 aa)). Residues 273–281 (LGQGCFGEV) and lysine 295 each bind ATP. Aspartate 386 serves as the catalytic Proton acceptor. Tyrosine 416 bears the Phosphotyrosine; by autocatalysis mark.

It belongs to the protein kinase superfamily. Tyr protein kinase family. SRC subfamily. As to quaternary structure, homodimer. In terms of processing, the phosphorylated form is termed pp60v-src.

It carries out the reaction L-tyrosyl-[protein] + ATP = O-phospho-L-tyrosyl-[protein] + ADP + H(+). Its function is as follows. This phosphoprotein, required for both the initiation and the maintenance of neoplastic transformation, is a protein kinase that catalyzes the phosphorylation of tyrosine residues in vitro. Causes mitotic slippage in addition to cytokinesis failure in the host cell. Phosphorylates and attenuates the activity of host CDK1, possibly causing the mitotic slippage. This chain is Tyrosine-protein kinase transforming protein Src (V-SRC), found in Rous sarcoma virus subgroup A (strain Schmidt-Ruppin) (RSV-SR-A).